Reading from the N-terminus, the 287-residue chain is Probable ABC transporter extracellular-binding protein YckB (287 aa).

Positions 1–24 (MKSFMHSKAVIFSFTMAFFLILAA) are cleaved as a signal peptide. The N-palmitoyl cysteine moiety is linked to residue cysteine 25. Cysteine 25 carries S-diacylglycerol cysteine lipidation.

The protein belongs to the bacterial solute-binding protein 3 family.

Its subcellular location is the cell membrane. Its function is as follows. Probably part of a binding-protein-dependent transport system. The polypeptide is Probable ABC transporter extracellular-binding protein YckB (yckB) (Bacillus subtilis (strain 168)).